The following is a 335-amino-acid chain: Pyridoxal 5'-phosphate synthase subunit PdxS (335 aa).

Residue D30 participates in D-ribose 5-phosphate binding. The Schiff-base intermediate with D-ribose 5-phosphate role is filled by K87. G159 serves as a coordination point for D-ribose 5-phosphate. A D-glyceraldehyde 3-phosphate-binding site is contributed by R171. Residues G257 and 278-279 contribute to the D-ribose 5-phosphate site; that span reads GS.

The protein belongs to the PdxS/SNZ family. Homohexamer. In the presence of PdxT, forms a dodecamer of heterodimers.

It carries out the reaction aldehydo-D-ribose 5-phosphate + D-glyceraldehyde 3-phosphate + L-glutamine = pyridoxal 5'-phosphate + L-glutamate + phosphate + 3 H2O + H(+). It participates in cofactor biosynthesis; pyridoxal 5'-phosphate biosynthesis. Functionally, catalyzes the formation of pyridoxal 5'-phosphate from ribose 5-phosphate (RBP), glyceraldehyde 3-phosphate (G3P) and ammonia. The ammonia is provided by the PdxT subunit. Can also use ribulose 5-phosphate and dihydroxyacetone phosphate as substrates, resulting from enzyme-catalyzed isomerization of RBP and G3P, respectively. The chain is Pyridoxal 5'-phosphate synthase subunit PdxS from Pyrococcus horikoshii (strain ATCC 700860 / DSM 12428 / JCM 9974 / NBRC 100139 / OT-3).